A 282-amino-acid polypeptide reads, in one-letter code: sn-glycerol-3-phosphate transport system permease protein UgpE (282 aa).

6 helical membrane-spanning segments follow: residues 14 to 34 (LMLI…FVAS), 86 to 106 (IAIA…IVFF), 112 to 132 (MAFF…RILP), 136 to 156 (VIVD…LMAS), 201 to 221 (IAAL…WPLL), and 248 to 268 (WNYV…VVVL). An ABC transmembrane type-1 domain is found at 78-269 (LFNTFVVAIA…IPPVAVVVLM (192 aa)).

This sequence belongs to the binding-protein-dependent transport system permease family. The complex is composed of two ATP-binding proteins (UgpC), two transmembrane proteins (UgpA and UgpE) and a solute-binding protein (UgpB).

The protein resides in the cell inner membrane. In terms of biological role, part of the ABC transporter complex UgpBAEC involved in sn-glycerol-3-phosphate (G3P) import. Probably responsible for the translocation of the substrate across the membrane. The protein is sn-glycerol-3-phosphate transport system permease protein UgpE (ugpE) of Rhizobium meliloti (strain 1021) (Ensifer meliloti).